Consider the following 413-residue polypeptide: Extracellular sucrase (413 aa).

The active-site Nucleophile is the aspartate 44. Glutamate 276 (proton donor/acceptor) is an active-site residue.

This sequence belongs to the glycosyl hydrolase 68 family.

Its subcellular location is the secreted. It carries out the reaction Hydrolysis of terminal non-reducing beta-D-fructofuranoside residues in beta-D-fructofuranosides.. This is Extracellular sucrase (sacC) from Zymomonas mobilis subsp. mobilis (strain ATCC 10988 / DSM 424 / LMG 404 / NCIMB 8938 / NRRL B-806 / ZM1).